The sequence spans 223 residues: Cuticular glutathione peroxidase (223 aa).

The first 19 residues, 1 to 19 (MSAQLLILSHMVLLQLIVA), serve as a signal peptide directing secretion. The N-linked (GlcNAc...) asparagine glycan is linked to N39. C74 is a catalytic residue. The N-linked (GlcNAc...) asparagine glycan is linked to N92.

This sequence belongs to the glutathione peroxidase family. As to quaternary structure, homotetramer.

The protein resides in the secreted. The catalysed reaction is 2 glutathione + H2O2 = glutathione disulfide + 2 H2O. Functionally, could inhibit the oxidative burst of leukocytes and neutralize the secondary products of lipid peroxidation, thus providing the resistance of these parasites to immune effector mechanisms and their persistence in the mammalian host. It may also be involved in the formation of cross-linking residues such as dityrosine, trityrosine and isotrityrosine identified in cuticular collagen. Highly cross-linked external cortex may also serve to protect the parasite from immune attack. This is Cuticular glutathione peroxidase from Brugia malayi (Filarial nematode worm).